A 992-amino-acid polypeptide reads, in one-letter code: Meckelin (992 aa).

Residues 1–35 (MVMRTRPLAAMAVRSCFSALTGTVYLLLVLCEVSW) form the signal peptide. Residues 36-516 (AQIFSFPFQR…SVKYEMNQGD (481 aa)) lie on the Extracellular side of the membrane. The tract at residues 37-280 (QIFSFPFQRP…FHYVFEGAAG (244 aa)) is cysteine-rich. 12 disulfides stabilise this stretch: Cys-49/Cys-62, Cys-65/Cys-78, Cys-80/Cys-97, Cys-100/Cys-114, Cys-117/Cys-127, Cys-129/Cys-150, Cys-153/Cys-170, Cys-173/Cys-184, Cys-186/Cys-197, Cys-237/Cys-246, Cys-253/Cys-268, and Cys-354/Cys-375. Asn-242 carries N-linked (GlcNAc...) asparagine glycosylation. A helical membrane pass occupies residues 517–545 (AFVQTDIALGVLGGLAVLSSLLKTAGWKR). Residues 546 to 555 (RIGSPMIDLQ) lie on the Cytoplasmic side of the membrane. Residues 556 to 587 (TVMKFLLYYAGDLANVFFIITVGTGLYWLIFF) form a helical membrane-spanning segment. Over 588 to 600 (KAQKSVSVLLPMP) the chain is Extracellular. A helical membrane pass occupies residues 601–628 (VQEERFVTYVGCAFAMKALQFLHKLISQ). Over 629 to 667 (ITIDIFFIDWERPKGKVLKAVEGEGGVRSATVPVSIWRT) the chain is Cytoplasmic. An intramembrane region (helical) is located at residues 668-676 (YFVANEWNE). Residues 668 to 698 (YFVANEWNEIQTVRKINPLFQVLTTLFFLEV) traverse the membrane as a discontinuously helical segment. An intramembrane segment occupies 677–685 (IQTVRKINP). The segment at residues 686-698 (LFQVLTTLFFLEV) is an intramembrane region (helical). Residues 699–728 (VGFKNLALMDPSSSLSRSLSDYAAPYSRIL) lie on the Extracellular side of the membrane. Residues 729–754 (RYAVATTIWLVIGIVQVVFFAAFYER) constitute an intramembrane region (helical). A discontinuously helical transmembrane segment spans residues 729-768 (RYAVATTIWLVIGIVQVVFFAAFYERFIEDKIRQFVDLCS). Residues 755 to 759 (FIEDK) lie within the membrane without spanning it. The helical intramembrane region spans 760 to 768 (IRQFVDLCS). Over 769-923 (MSNVSVFLLS…SIFYNDESHS (155 aa)) the chain is Cytoplasmic. An intramembrane region (helical) is located at residues 924–926 (FSS). A discontinuously helical transmembrane segment spans residues 924–949 (FSSVLYYGNEATLLIFDLLFFCVVDL). An intramembrane segment occupies 927-933 (VLYYGNE). Residues 934 to 949 (ATLLIFDLLFFCVVDL) constitute an intramembrane region (helical). Over 950-954 (ACQNF) the chain is Extracellular. Residues 955–982 (VLASFLTYLQQEIFRFIRNTVGQKNLAT) traverse the membrane as a helical segment. Over 983–992 (KTLVDERFLI) the chain is Cytoplasmic.

As to quaternary structure, homodimer. Part of the tectonic-like complex (also named B9 complex). Interacts with DNAJB9, DNAJC10 and mutated SFTPC. Interacts with SYNE2 during the early establishment of cell polarity. Interacts (via C-terminus) with FLNA. Interacts with TMEM218. Interacts with WNT5A. Interacts with ROR2.

Its subcellular location is the cell membrane. It is found in the endoplasmic reticulum membrane. The protein localises to the cytoplasm. It localises to the cytoskeleton. The protein resides in the cilium basal body. Part of the tectonic-like complex which is required for tissue-specific ciliogenesis and may regulate ciliary membrane composition. Involved in centrosome migration to the apical cell surface during early ciliogenesis. Required for ciliary structure and function, including a role in regulating length and appropriate number through modulating centrosome duplication. Is a key regulator of stereociliary bundle orientation. Required for epithelial cell branching morphology. Essential for endoplasmic reticulum-associated degradation (ERAD) of surfactant protein C (sftpc). Involved in the negative regulation of canonical Wnt signaling, and activation of the non-canonical cascade stimulated by WNT5A. In non-canonical Wnt signaling, it may act as ROR2 coreceptor. The polypeptide is Meckelin (Tmem67) (Rattus norvegicus (Rat)).